The primary structure comprises 544 residues: MELPFSAMSLLYLLVGIAGVISHQCYFRRGEHHLYPFAYLRWYTLIITAPTVVVSIVWGLPLYDAAKATGGWALTYFAGLYTSLLLYRVQFHPLHGFPGPYGARISGLWLSMGLRDRPAFQKLQELHNQYGPIVRVGPSELSIAYPEAVGIVYGHQSRCYKSTFYDNGHPMKSLHSYRDRAAHDQRRRTWSTGFGDRALRGYETRVHEYRQKLFTRLNDAVGLTVNISDWFNFYSYDVMGDLAFGRSFNMLDTHSNHWAIQVLLDGIVLYKYFVPSWLFRCFVTLPSLSKNWHRFVEFTTQKLVHRMNDKLEIPDICASLLAPLNGRSPTPDEFNLLMGDAMLVVTAGSDTTATALTSVVYELARHPEDVERLRAELLPIDADANGEYRHEQISNLPHLNGFINETLRLHPPVPSVIPRITPAEGVHVKGTHIPGGMAVFCPQWVIGRSDAAFIAPLSFNPERWYKHPDLIKHRSAYAPFLTGPYSCIGKPLALMNIRTTIARLIMTFEIRFPAGEDGSHLMENVEDHFSMGIERMPVVLTRRG.

The N-terminal stretch at 1–22 is a signal peptide; that stretch reads MELPFSAMSLLYLLVGIAGVIS. 2 consecutive transmembrane segments (helical) span residues 42 to 62 and 66 to 86; these read WYTL…GLPL and AKAT…SLLL. N-linked (GlcNAc...) asparagine glycosylation is found at asparagine 226 and asparagine 404. Cysteine 487 serves as a coordination point for heme.

This sequence belongs to the cytochrome P450 family. The cofactor is heme.

It localises to the membrane. Its pathway is alkaloid biosynthesis. Functionally, cytochrome P450 monooxygenase; part of the gene cluster that mediates the biosynthesis of notoamide, a fungal indole alkaloid that belongs to a family of natural products containing a characteristic bicyclo[2.2.2]diazaoctane core. The first step of notoamide biosynthesis involves coupling of L-proline and L-tryptophan by the bimodular NRPS notE', to produce cyclo-L-tryptophan-L-proline called brevianamide F. The reverse prenyltransferase notF' then acts as a deoxybrevianamide E synthase and converts brevianamide F to deoxybrevianamide E via reverse prenylation at C-2 of the indole ring leading to the bicyclo[2.2.2]diazaoctane core. Deoxybrevianamide E is further hydroxylated at C-6 of the indole ring, likely catalyzed by the cytochrome P450 monooxygenase notG', to yield 6-hydroxy-deoxybrevianamide E. 6-hydroxy-deoxybrevianamide E is a specific substrate of the prenyltransferase notC' for normal prenylation at C-7 to produce 6-hydroxy-7-prenyl-deoxybrevianamide, also called notoamide S. As the proposed pivotal branching point in notoamide biosynthesis, notoamide S can be diverted to notoamide E through an oxidative pyran ring closure putatively catalyzed by either notH' cytochrome P450 monooxygenase or the notD' FAD-linked oxidoreductase. This step would be followed by an indole 2,3-epoxidation-initiated pinacol-like rearrangement catalyzed by the notB' FAD-dependent monooxygenase leading to the formation of notoamide C and notoamide D. On the other hand notoamide S is converted to notoamide T by notH' (or notD'), a bifunctional oxidase that also functions as the intramolecular Diels-Alderase responsible for generation of (-)-notoamide T. To generate antipodal (+)-notoaminide T, notH (or notD) in Aspergillus strain MF297-2 is expected to catalyze a Diels-Alder reaction leading to the opposite stereochemistry. The remaining oxidoreductase notD' (or notH') likely catalyzes the oxidative pyran ring formation to yield (-)-stephacidin A. The FAD-dependent monooxygenase notI' is highly similar to notB' and is predicted to catalyze a similar conversion from (-)-stephacidin A to (+)-notoamide B via the 2,3-epoxidation of (-)-stephacidin A followed by a pinacol-type rearrangement. Finally, it remains unclear which enzyme could be responsible for the final hydroxylation steps leading to notoamide A and sclerotiamide. This chain is Cytochrome P450 monooxygenase notG', found in Aspergillus versicolor.